We begin with the raw amino-acid sequence, 367 residues long: PR domain zinc finger protein 12 (367 aa).

Positions 86 to 203 constitute an SET domain; it reads AEVIIAQSSI…PDQELLVWYG (118 aa). 3 consecutive C2H2-type zinc fingers follow at residues 243-265, 271-293, and 299-323; these read MRCV…MRIH, FVCR…VRLH, and YKCQ…SARH. The disordered stretch occupies residues 318–337; it reads QKSARHRPPSTALQAHSPAL.

This sequence belongs to the class V-like SAM-binding methyltransferase superfamily. In terms of assembly, interacts with EHMT2. Not found in adult tissues except in dorsal root ganglia.

The protein localises to the nucleus. In terms of biological role, transcriptional regulator necessary for the development of nociceptive neurons, playing a key role in determining the nociceptive lineage from neural crest cell progenitors. Initiates neurogenesis and activates downstream pro-neuronal transcription factors, such as NEUROD1, BRN3A, and ISL1, specifically within nociceptive neurons, while repressing non-nociceptor cell fates. Essential for the proper function of nociceptors in adults, influencing both their excitability and their gene expression, thereby impacting how these neurons respond to various pain stimuli. In Homo sapiens (Human), this protein is PR domain zinc finger protein 12 (PRDM12).